A 262-amino-acid polypeptide reads, in one-letter code: MKIHDFKMKKQEQKKISMLTCYDYPSACIVAESNIDCVLVGDSVAMAVHGHPTTIMATIEMMELHTQAVARGLGKQFLITDLPFLGHKSSQGHTVENVKRLLQAGAQAVKIEGADKDTCQTISHLVNAGIPVMGHIGLTPQSIHQLGGYKVQGKNSEQAETLLQQAATLEQAGCFAVVIECVPQDLAKTITDSLVIPTIGIGAGPGTDGQVLVWHDMLGLQTSFNPKFVKKYFRAKDHFIEALNSYVQQVQQMHFPANEHSF.

Mg(2+) contacts are provided by aspartate 42 and aspartate 81. 3-methyl-2-oxobutanoate is bound by residues 42–43, aspartate 81, and lysine 110; that span reads DS. A Mg(2+)-binding site is contributed by glutamate 112. The Proton acceptor role is filled by glutamate 180.

Belongs to the PanB family. As to quaternary structure, homodecamer; pentamer of dimers. Requires Mg(2+) as cofactor.

It localises to the cytoplasm. The enzyme catalyses 3-methyl-2-oxobutanoate + (6R)-5,10-methylene-5,6,7,8-tetrahydrofolate + H2O = 2-dehydropantoate + (6S)-5,6,7,8-tetrahydrofolate. It participates in cofactor biosynthesis; (R)-pantothenate biosynthesis; (R)-pantoate from 3-methyl-2-oxobutanoate: step 1/2. Functionally, catalyzes the reversible reaction in which hydroxymethyl group from 5,10-methylenetetrahydrofolate is transferred onto alpha-ketoisovalerate to form ketopantoate. The sequence is that of 3-methyl-2-oxobutanoate hydroxymethyltransferase from Legionella pneumophila (strain Paris).